Consider the following 228-residue polypeptide: LexA repressor (228 aa).

A DNA-binding region (H-T-H motif) is located at residues 28-48 (IREIGEALDIRSTNGVNDHLK). Catalysis depends on for autocatalytic cleavage activity residues Ser-146 and Lys-183.

This sequence belongs to the peptidase S24 family. Homodimer.

It carries out the reaction Hydrolysis of Ala-|-Gly bond in repressor LexA.. Its function is as follows. Represses a number of genes involved in the response to DNA damage (SOS response), including recA and lexA. In the presence of single-stranded DNA, RecA interacts with LexA causing an autocatalytic cleavage which disrupts the DNA-binding part of LexA, leading to derepression of the SOS regulon and eventually DNA repair. In Anaeromyxobacter dehalogenans (strain 2CP-1 / ATCC BAA-258), this protein is LexA repressor.